Here is a 325-residue protein sequence, read N- to C-terminus: NADH-quinone oxidoreductase subunit H (325 aa).

Transmembrane regions (helical) follow at residues 11-31, 81-101, 114-134, 154-174, 186-206, 237-257, 265-285, and 304-324; these read ILLTILKAVVILLVVVTCGAF, VIFTLAPMIAFTSLLLAFAIV, IGILFFLMMAGLAVYAVLFAG, LSYEVFLGLSLMGVVAQAGSF, VWNVIPQFFGFITFAIAGVAV, FFVGEYIGIVTISALMVTLFF, LPPFIWFALKTAFFMMMFILI, and ICLPLTLINLLVTAAVILWQA.

It belongs to the complex I subunit 1 family. NDH-1 is composed of 13 different subunits. Subunits NuoA, H, J, K, L, M, N constitute the membrane sector of the complex.

The protein resides in the cell inner membrane. The catalysed reaction is a quinone + NADH + 5 H(+)(in) = a quinol + NAD(+) + 4 H(+)(out). Its function is as follows. NDH-1 shuttles electrons from NADH, via FMN and iron-sulfur (Fe-S) centers, to quinones in the respiratory chain. The immediate electron acceptor for the enzyme in this species is believed to be ubiquinone. Couples the redox reaction to proton translocation (for every two electrons transferred, four hydrogen ions are translocated across the cytoplasmic membrane), and thus conserves the redox energy in a proton gradient. This subunit may bind ubiquinone. In Escherichia fergusonii (strain ATCC 35469 / DSM 13698 / CCUG 18766 / IAM 14443 / JCM 21226 / LMG 7866 / NBRC 102419 / NCTC 12128 / CDC 0568-73), this protein is NADH-quinone oxidoreductase subunit H.